Consider the following 394-residue polypeptide: Nuclear pore glycoprotein p62 (394 aa).

Repeat copies occupy residues Phe-22–Gly-23, Phe-50–Gly-51, Phe-75–Gly-76, Phe-77–Gly-78, and Phe-116–Gly-117. Residues Phe-22–Gly-117 form a 5 X 2 AA repeats of F-G region. Positions Lys-45–Ala-57 are enriched in low complexity. The tract at residues Lys-45–Pro-73 is disordered. Positions Ser-211–Gln-341 form a coiled coil.

The protein belongs to the nucleoporin NSP1/NUP62 family. As to expression, expressed in adult male accessory glands (at protein level).

The protein resides in the nucleus. The protein localises to the chromosome. Its subcellular location is the nucleus envelope. It is found in the nuclear pore complex. It localises to the cytoplasm. The protein resides in the cytoskeleton. The protein localises to the spindle pole. Its subcellular location is the microtubule organizing center. It is found in the centrosome. Functionally, essential component of the nuclear pore complex. The N-terminal is probably involved in nucleocytoplasmic transport. The C-terminal is involved in protein-protein interaction probably via coiled-coil formation, promotes its association with centrosomes and may function in anchorage of Nup62 to the pore complex. Binds to transcriptionally active genes. Negatively regulates chromatin attachment to the nuclear envelope, probably by preventing chromatin tethering by Nup154. The polypeptide is Nuclear pore glycoprotein p62 (Drosophila melanogaster (Fruit fly)).